The sequence spans 327 residues: Serine/threonine-protein phosphatase PP1-1 (327 aa).

Positions 63, 65, 91, and 123 each coordinate Mn(2+). H124 (proton donor) is an active-site residue. Positions 172 and 247 each coordinate Mn(2+). Positions 305 to 327 (GYQGSSQNWHMTPPRKNKTGNSK) are disordered. T316 bears the Phosphothreonine; by CDC2 mark. Basic residues predominate over residues 317–327 (PPRKNKTGNSK).

Belongs to the PPP phosphatase family. PP-1 subfamily. As to quaternary structure, oligomer. It depends on Mn(2+) as a cofactor.

The protein resides in the nucleus. The catalysed reaction is O-phospho-L-seryl-[protein] + H2O = L-seryl-[protein] + phosphate. The enzyme catalyses O-phospho-L-threonyl-[protein] + H2O = L-threonyl-[protein] + phosphate. Essential role in cell cycle control. PP1 is perhaps required for exit from mitosis. This is Serine/threonine-protein phosphatase PP1-1 (dis2) from Schizosaccharomyces pombe (strain 972 / ATCC 24843) (Fission yeast).